Here is a 405-residue protein sequence, read N- to C-terminus: Histidine decarboxylase (405 aa).

Substrate is bound at residue His121. Lys234 is modified (N6-(pyridoxal phosphate)lysine).

This sequence belongs to the group II decarboxylase family. As to quaternary structure, homotetramer. Requires pyridoxal 5'-phosphate as cofactor.

The catalysed reaction is L-histidine + H(+) = histamine + CO2. Its pathway is siderophore biosynthesis; pseudomonine biosynthesis. This Pseudomonas fluorescens protein is Histidine decarboxylase.